A 223-amino-acid polypeptide reads, in one-letter code: Neurotrophic factor BDNF precursor form (223 aa).

An N-terminal signal peptide occupies residues 1-5 (SCMKA). A propeptide spanning residues 6-114 (APMKEVSIRG…AANMSMRVRR (109 aa)) is cleaved from the precursor. N107 is a glycosylation site (N-linked (GlcNAc...) asparagine). Intrachain disulfides connect C127-C194 and C172-C223.

It belongs to the NGF-beta family.

Its subcellular location is the secreted. Its function is as follows. Promotes the survival of neuronal populations that are all located either in the central nervous system or directly connected to it. This is Neurotrophic factor BDNF precursor form (BDNF) from Chilabothrus striatus (Haitian boa constrictor).